We begin with the raw amino-acid sequence, 217 residues long: Methylthioribulose-1-phosphate dehydratase (217 aa).

Residues His-106 and His-108 each coordinate Zn(2+).

Belongs to the aldolase class II family. MtnB subfamily. Zn(2+) serves as cofactor.

It carries out the reaction 5-(methylsulfanyl)-D-ribulose 1-phosphate = 5-methylsulfanyl-2,3-dioxopentyl phosphate + H2O. It functions in the pathway amino-acid biosynthesis; L-methionine biosynthesis via salvage pathway; L-methionine from S-methyl-5-thio-alpha-D-ribose 1-phosphate: step 2/6. In terms of biological role, catalyzes the dehydration of methylthioribulose-1-phosphate (MTRu-1-P) into 2,3-diketo-5-methylthiopentyl-1-phosphate (DK-MTP-1-P). In Xanthomonas campestris pv. campestris (strain B100), this protein is Methylthioribulose-1-phosphate dehydratase.